A 312-amino-acid polypeptide reads, in one-letter code: Homeobox-leucine zipper protein ATHB-5 (312 aa).

The segment at 1-33 (MKRSRGSSDSLSGFLPIRHSTTDKQISPRPTTT) is disordered. Positions 23-33 (DKQISPRPTTT) are enriched in polar residues. Positions 69 to 128 (AAEKKRRLGVEQVKALEKNFEIDNKLEPERKVKLAQELGLQPRQVAIWFQNRRARWKTKQ) form a DNA-binding region, homeobox. The tract at residues 129 to 164 (LERDYGVLKSNFDALKRNRDSLQRDNDSLLGQIKEL) is leucine-zipper.

It belongs to the HD-ZIP homeobox family. Class I subfamily. As to quaternary structure, interacts with DNA as homodimer. In terms of tissue distribution, widely expressed.

The protein resides in the nucleus. Probable transcription factor that acts as a positive regulator of ABA-responsiveness, mediating the inhibitory effect of ABA on growth during seedling establishment. Binds to the DNA sequence 5'-CAATNATTG-3'. The polypeptide is Homeobox-leucine zipper protein ATHB-5 (ATHB-5) (Arabidopsis thaliana (Mouse-ear cress)).